We begin with the raw amino-acid sequence, 147 residues long: HETDPDGHVLNSLMLIVMKFQREFSNLKDAFMTVHKARSFGSGSERLYVTNKEVGNFEGLGEICRQAGGRIPSPQLKNQNKAFANVLERHNKEAYLVVGNSANFTNWAEGQPKKADGTCVKADTHGLWHSTSCDDNLLVVCEFYFIL.

Positions 62-143 (EICRQAGGRI…DDNLLVVCEF (82 aa)) constitute a C-type lectin domain. 2 disulfides stabilise this stretch: Cys-64-Cys-141 and Cys-119-Cys-133. Asn-103 is a glycosylation site (N-linked (GlcNAc...) asparagine).

Belongs to the alpha-type phospholipase A2 inhibitor family. As to quaternary structure, homotrimer; non-covalently linked. In terms of processing, glycosylated. In terms of tissue distribution, expressed by the liver.

The protein localises to the secreted. In terms of biological role, inhibits the enzymatic activity of the acidic phospholipase A2 (PLA2). This is Phospholipase A2 inhibitor subunit A from Gloydius brevicaudus siniticus (Chinese mamushi).